The primary structure comprises 88 residues: MLNTKFDELMEFPCAFPFKVVGDAHETLTDRVVAVVQKHAPGDYSPTVKASSKGSYYSVTIRVTVTSKDHIETLYTELANIEGVRRVL.

Belongs to the UPF0250 family.

This Shewanella oneidensis (strain ATCC 700550 / JCM 31522 / CIP 106686 / LMG 19005 / NCIMB 14063 / MR-1) protein is UPF0250 protein SO_1163.